A 23-amino-acid polypeptide reads, in one-letter code: U3-ctenitoxin-Co1a (23 aa).

2 disulfides stabilise this stretch: cysteine 2–cysteine 17 and cysteine 9–cysteine 22.

In terms of tissue distribution, expressed by the venom gland.

It localises to the secreted. Its function is as follows. Antagonist of L-type calcium channels (Cav1/CACNA1). This Ctenus ornatus (Brazilian spider) protein is U3-ctenitoxin-Co1a.